The chain runs to 264 residues: Triosephosphate isomerase (264 aa).

13 to 15 (NWK) is a binding site for substrate. The active-site Electrophile is H106. E179 functions as the Proton acceptor in the catalytic mechanism. Substrate is bound by residues G185, S223, and 244 to 245 (GG).

This sequence belongs to the triosephosphate isomerase family. Homodimer.

Its subcellular location is the cytoplasm. It carries out the reaction D-glyceraldehyde 3-phosphate = dihydroxyacetone phosphate. Its pathway is carbohydrate biosynthesis; gluconeogenesis. It participates in carbohydrate degradation; glycolysis; D-glyceraldehyde 3-phosphate from glycerone phosphate: step 1/1. Involved in the gluconeogenesis. Catalyzes stereospecifically the conversion of dihydroxyacetone phosphate (DHAP) to D-glyceraldehyde-3-phosphate (G3P). The sequence is that of Triosephosphate isomerase from Acinetobacter baumannii (strain AB0057).